The sequence spans 125 residues: Putative RNA polymerase sigma-G factor (125 aa).

Belongs to the sigma-70 factor family.

Functionally, sigma factors are initiation factors that promote the attachment of RNA polymerase to specific initiation sites and are then released. The protein is Putative RNA polymerase sigma-G factor of Bacillus thuringiensis subsp. kurstaki.